The following is a 493-amino-acid chain: Guanosine-5'-triphosphate,3'-diphosphate pyrophosphatase (493 aa).

It belongs to the GppA/Ppx family. GppA subfamily.

The enzyme catalyses guanosine 3'-diphosphate 5'-triphosphate + H2O = guanosine 3',5'-bis(diphosphate) + phosphate + H(+). It participates in purine metabolism; ppGpp biosynthesis; ppGpp from GTP: step 2/2. Functionally, catalyzes the conversion of pppGpp to ppGpp. Guanosine pentaphosphate (pppGpp) is a cytoplasmic signaling molecule which together with ppGpp controls the 'stringent response', an adaptive process that allows bacteria to respond to amino acid starvation, resulting in the coordinated regulation of numerous cellular activities. The chain is Guanosine-5'-triphosphate,3'-diphosphate pyrophosphatase from Salmonella dublin (strain CT_02021853).